Reading from the N-terminus, the 199-residue chain is Probable GTP-binding protein EngB (199 aa).

Residues 28–199 (DLPEIALAGR…DSWDAILEQV (172 aa)) enclose the EngB-type G domain. GTP-binding positions include 36-43 (GRSNVGKS), 63-67 (GKTQL), 81-84 (DVPG), 148-151 (TKAD), and 180-182 (FSS). Residues serine 43 and threonine 65 each coordinate Mg(2+).

The protein belongs to the TRAFAC class TrmE-Era-EngA-EngB-Septin-like GTPase superfamily. EngB GTPase family. Mg(2+) serves as cofactor.

Its function is as follows. Necessary for normal cell division and for the maintenance of normal septation. This chain is Probable GTP-binding protein EngB, found in Streptococcus pyogenes serotype M18 (strain MGAS8232).